The sequence spans 3295 residues: Toxin CdiA (3295 aa).

Positions Pro33–Ala366 are two-partner system transport domain (TPS). A helical membrane pass occupies residues Leu55 to Ser75. The segment at Gly353–Asn1574 is FHA-1. Residues Pro1165–Pro1185 form a disordered region. The segment at Arg1575–Pro1796 is receptor binding domain (RBD). The segment at Gly1797–Asn1977 is YP domain. Positions Asn1806–Thr1831 are disordered. The segment at Gly1998 to Asn2035 is periplasmic FHA-1 repeat (pFR). The interval Leu2022 to Ser2676 is FHA-2. Disordered stretches follow at residues Thr2260–Ser2292 and Gln2823–Glu2847. The span at Gln2823–Gly2838 shows a compositional bias: polar residues. Positions Val3073 to Asn3076 match the VENN CT cleavage motif motif. The interval Val3073–Lys3295 is CT domain. A disordered region spans residues Ser3276 to Lys3295. Basic and acidic residues predominate over residues Gln3286–Lys3295.

This sequence in the N-terminal section; belongs to the CdiA toxin family. As to quaternary structure, probably interacts with cognate immunity protein CdiI.

The protein localises to the membrane. The protein resides in the target cell. Its subcellular location is the target cell cytoplasm. Its function is as follows. Toxic component of a toxin-immunity protein module, which functions as a cellular contact-dependent growth inhibition (CDI) system. CDI modules allow bacteria to communicate with and inhibit the growth of closely related neighboring bacteria in a contact-dependent fashion. CDI is neutralized by its cognate immunity protein CdiI, but not by non-cognate CdiI from other bacteria. The CdiA protein is thought to be exported from the cell through the central lumen of CdiB, the other half of its two-partner system (TPS). The TPS domain probably remains associated with CdiB while the FHA-1 domain forms an extended filament with the receptor-binding domain (RBD) at its extremity; in the secretion arrested state the C-terminus of the RBD and YP domains form a hairpin-like structure as the FHA-2, PT and CT domains are periplasmic. The YP domain is probably responsible for this arrest at the point where it re-enters the host cell periplasm. Upon binding to a target cell outer membrane receptor a signal is transmitted to activate secretion. The filament elongates slightly, the rest of CdiA is secreted and the FHA-2 domain becomes stably associated with the target cell's outer membrane where it facilitates entry of the toxic CT domain into the target cell periplasm. From there the toxic CT domain is cleaved and gains access to the target cell cytoplasm via an inner membrane protein. This chain is Toxin CdiA, found in Yersinia pestis.